A 273-amino-acid polypeptide reads, in one-letter code: Dermonecrotic toxin LapSicTox-alphaII1 (273 aa).

The active site involves H5. The Mg(2+) site is built by E25 and D27. The active-site Nucleophile is H41. 2 cysteine pairs are disulfide-bonded: C45–C51 and C47–C191. Mg(2+) is bound at residue D85.

Belongs to the arthropod phospholipase D family. Class II subfamily. The cofactor is Mg(2+). In terms of tissue distribution, expressed by the venom gland.

Its subcellular location is the secreted. The enzyme catalyses an N-(acyl)-sphingosylphosphocholine = an N-(acyl)-sphingosyl-1,3-cyclic phosphate + choline. The catalysed reaction is an N-(acyl)-sphingosylphosphoethanolamine = an N-(acyl)-sphingosyl-1,3-cyclic phosphate + ethanolamine. It catalyses the reaction a 1-acyl-sn-glycero-3-phosphocholine = a 1-acyl-sn-glycero-2,3-cyclic phosphate + choline. It carries out the reaction a 1-acyl-sn-glycero-3-phosphoethanolamine = a 1-acyl-sn-glycero-2,3-cyclic phosphate + ethanolamine. Dermonecrotic toxins cleave the phosphodiester linkage between the phosphate and headgroup of certain phospholipids (sphingolipid and lysolipid substrates), forming an alcohol (often choline) and a cyclic phosphate. This toxin acts on sphingomyelin (SM). It may also act on ceramide phosphoethanolamine (CPE), lysophosphatidylcholine (LPC) and lysophosphatidylethanolamine (LPE), but not on lysophosphatidylserine (LPS), and lysophosphatidylglycerol (LPG). It acts by transphosphatidylation, releasing exclusively cyclic phosphate products as second products. Induces dermonecrosis, hemolysis, increased vascular permeability, edema, inflammatory response, and platelet aggregation. This is Dermonecrotic toxin LapSicTox-alphaII1 from Loxosceles apachea (Apache recluse spider).